The chain runs to 383 residues: tRNA-specific 2-thiouridylase MnmA (383 aa).

Residues 9–16 (GMSGGVDS) and Met35 each bind ATP. The interval 95-97 (NPD) is interaction with target base in tRNA. The Nucleophile role is filled by Cys100. A disulfide bridge links Cys100 with Cys196. Gly124 provides a ligand contact to ATP. An interaction with tRNA region spans residues 146–148 (KDQ). Cys196 serves as the catalytic Cysteine persulfide intermediate. The interval 308 to 309 (RY) is interaction with tRNA.

The protein belongs to the MnmA/TRMU family.

Its subcellular location is the cytoplasm. It catalyses the reaction S-sulfanyl-L-cysteinyl-[protein] + uridine(34) in tRNA + AH2 + ATP = 2-thiouridine(34) in tRNA + L-cysteinyl-[protein] + A + AMP + diphosphate + H(+). Catalyzes the 2-thiolation of uridine at the wobble position (U34) of tRNA, leading to the formation of s(2)U34. The sequence is that of tRNA-specific 2-thiouridylase MnmA from Burkholderia mallei (strain NCTC 10247).